Here is a 3131-residue protein sequence, read N- to C-terminus: Enniatin synthase (3131 aa).

A condensation 1 region spans residues 53 to 466; the sequence is ADDKQRAVGH…VEKVDMMTQE (414 aa). Positions 186 to 212 are disordered; sequence NDEHPRQFETPDSSQATPEEDLQPNPS. Positions 495-887 are adenylation 1; sequence SQSPNKAAVA…GRMDSQVKIR (393 aa). The Carrier 1 domain occupies 1010–1086; that stretch reads SSGTDTYTKL…GLKAIVIGTS (77 aa). Ser-1047 is modified (O-(pantetheine 4'-phosphoryl)serine). Positions 1105–1534 are condensation 2; the sequence is SYAQNRMWFL…ETCISVLPLT (430 aa). The tract at residues 1563-1960 is adenylation 2; it reads FREQAAANPE…GRMDNQFKIR (398 aa). The segment at 2021–2177 is S-adenosyl-L-methionine-dependent N-methyltransferase; that stretch reads EGWQDHFESG…YLAEVIDGLI (157 aa). Carrier domains are found at residues 2504–2578 and 2598–2671; these read FPIS…RQGL and APRT…ESSH. O-(pantetheine 4'-phosphoryl)serine is present on residues Ser-2538 and Ser-2632. The tract at residues 2718–3123 is condensation 3; it reads QDVYPSTQMQ…RHVLEEVCKT (406 aa).

The protein belongs to the ATP-dependent AMP-binding enzyme family. It depends on pantetheine 4'-phosphate as a cofactor. The N-terminus is blocked.

The protein operates within antibiotic biosynthesis; enniatin biosynthesis. With respect to regulation, the N-methylation activity is inhibited by S-adenosyl-L-homocysteine and sinefugin. In terms of biological role, nonribosomal peptide synthetase that synthesizes enniatin by coupling three D-hydroxycarboxylic acids and three L-amino acids via amide and ester bonds in an alternating fashion. Whereas ESYN1 can accept different amino acids as precursors (L -valine, L-isoleucine or L-leucine), only one species of D-hydroxycarboxylic acid can be found in natural enniatin isolates (D-hydroxyisovaleric acid, D-Hiv). D-Hiv stems from L-valine deanimation by a valine aminotransferase to 2-keto-isovaleric acid (2-Kiv), which becomes subsequently reduced by a keto-isovaleric acid reductase (KivR) to D-Hiv. Peptide bond formation and N-methylation of the amino acid occur before three enzyme-bound dipeptidols are condensed to a hexapeptidol. This chain is Enniatin synthase, found in Fusarium equiseti (Fusarium scirpi).